The following is a 566-amino-acid chain: Tetratricopeptide repeat protein 34 (566 aa).

Residues 1–29 (MLQRSPRAGPSRAQGRREAAETGGPTTQE) are disordered. TPR repeat units follow at residues 50–83 (EASR…RPQA), 178–211 (SESL…EPGN), 212–245 (VQAL…GPGT), 306–339 (PHWH…APTS), 341–373 (AARA…DAPD), 424–457 (ACHL…ALGD), 464–497 (AEDF…APSL), and 512–545 (ARMF…DPDH).

This chain is Tetratricopeptide repeat protein 34 (TTC34), found in Homo sapiens (Human).